Consider the following 297-residue polypeptide: MITIEISINLELIISFYLLFILGANNVANAIGTAYASRATTYRNLLILFSISVIIGSLFAKNVGSTVNSLSSDALTALIISALVMTLSTYKKVPISLHTVIICSLIGLNFNSSNLYVFGEILLSWILSPIIAVVIAYILYSAYEKIDISILKKITMIRYFLLISAAVVAFNLGSNDLPTVLGTFTTSQIIYIIGAIFLCLGAYLYGNRVSETLSMITNLSVSSAFIAQLSGGLAVTIFTALGMPVSTTQAIVGGILGVGLTKGIKTVRWKVLKNIIFWWVVAPIIALIIGFIINRMI.

9 helical membrane-spanning segments follow: residues 2–22 (ITIE…LFIL), 45–65 (LLIL…NVGS), 67–87 (VNSL…VMTL), 99–119 (TVII…YVFG), 121–141 (ILLS…ILYS), 154–174 (ITMI…NLGS), 180–200 (VLGT…FLCL), 225–245 (FIAQ…GMPV), and 274–294 (NIIF…FIIN).

This sequence belongs to the inorganic phosphate transporter (PiT) (TC 2.A.20) family.

Its subcellular location is the cell membrane. Potential transporter for phosphate. The protein is Putative phosphate permease MJ0630 of Methanocaldococcus jannaschii (strain ATCC 43067 / DSM 2661 / JAL-1 / JCM 10045 / NBRC 100440) (Methanococcus jannaschii).